The following is a 1413-amino-acid chain: DNA-directed RNA polymerase subunit beta' (1413 aa).

4 residues coordinate Zn(2+): C70, C72, C85, and C88. Mg(2+) contacts are provided by D460, D462, and D464. Zn(2+) is bound by residues C819, C893, C900, and C903.

This sequence belongs to the RNA polymerase beta' chain family. In terms of assembly, the RNAP catalytic core consists of 2 alpha, 1 beta, 1 beta' and 1 omega subunit. When a sigma factor is associated with the core the holoenzyme is formed, which can initiate transcription. Mg(2+) serves as cofactor. Requires Zn(2+) as cofactor.

It carries out the reaction RNA(n) + a ribonucleoside 5'-triphosphate = RNA(n+1) + diphosphate. DNA-dependent RNA polymerase catalyzes the transcription of DNA into RNA using the four ribonucleoside triphosphates as substrates. The protein is DNA-directed RNA polymerase subunit beta' of Burkholderia multivorans (strain ATCC 17616 / 249).